Consider the following 1306-residue polypeptide: Angiotensin-converting enzyme (1306 aa).

Positions 1–28 (MGAASGRRSPPLLLPLLLLLLPPPPVIL) are cleaved as a signal peptide. Residues 29–1256 (ELDPALQPGN…GLNLEEQQAR (1228 aa)) are Extracellular-facing. 2 Peptidase M2 domains span residues 40–624 (PADE…LGWP) and 643–1222 (VSDE…LGWP). N54, N74, N111, N146, and N160 each carry an N-linked (GlcNAc...) asparagine glycan. C157 and C165 are oxidised to a cystine. Chloride is bound at residue Y231. N318 carries an N-linked (GlcNAc...) asparagine glycan. Cysteines 359 and 377 form a disulfide. Position 390 (H390) interacts with Zn(2+). The Proton acceptor 1 role is filled by E391. Residues H394 and E418 each coordinate Zn(2+). 2 N-linked (GlcNAc...) asparagine glycosylation sites follow: N445 and N509. H520 serves as the catalytic Proton donor 1. Residue N523 is glycosylated (N-linked (GlcNAc...) asparagine). R529 contacts chloride. Residues C545 and C557 are joined by a disulfide bond. N-linked (GlcNAc...) asparagine glycosylation is found at N673, N695, N714, and N760. Cysteines 757 and 763 form a disulfide. 2 residues coordinate chloride: R791 and Y829. Residue N942 is glycosylated (N-linked (GlcNAc...) asparagine). A disulfide bridge connects residues C957 and C975. H988 lines the Zn(2+) pocket. The active-site Proton acceptor 2 is the E989. Zn(2+) is bound by residues H992 and E1016. Chloride contacts are provided by W1090 and R1094. The active-site Proton donor 2 is H1118. A chloride-binding site is contributed by R1127. A disulfide bridge links C1143 with C1155. 2 N-linked (GlcNAc...) asparagine glycosylation sites follow: N1191 and N1225. Residues 1215–1256 (HGEKLGWPQYNWTPNSARLEGPFVGSGRVNFLGLNLEEQQAR) form a juxtamembrane stalk region. Residues 1257 to 1277 (VGQWVLLFLGVALLVATLGLT) traverse the membrane as a helical segment. Over 1278–1306 (QRLFSIRHHSLRRPHRGPQFGSEVELRHS) the chain is Cytoplasmic. Residue S1299 is modified to Phosphoserine.

This sequence belongs to the peptidase M2 family. Monomer and homodimer; homodimerizes following binding to an inhibitor. Interacts with calmodulin (CALM1, CALM2 or CALM3); interaction takes place in the cytoplasmic region and regulates phosphorylation and proteolytic cleavage. The cofactor is Zn(2+). Chloride serves as cofactor. In terms of processing, produced following proteolytic cleavage by secretase enzymes that cleave the transmembrane form in the juxtamembrane stalk region upstream of the transmembrane region. Cleavage can take place at different sites of the juxtamembrane stalk region. Phosphorylated by CK2 on Ser-1299; which allows membrane retention. Phosphorylated on tyrosine residues on its extracellular part, promoting cleavage by secretase enzymes and formation of the soluble form (Angiotensin-converting enzyme, soluble form).

The protein localises to the cell membrane. Its subcellular location is the cytoplasm. It is found in the secreted. It catalyses the reaction Release of a C-terminal dipeptide, oligopeptide-|-Xaa-Yaa, when Xaa is not Pro, and Yaa is neither Asp nor Glu. Thus, conversion of angiotensin I to angiotensin II, with increase in vasoconstrictor activity, but no action on angiotensin II.. It carries out the reaction angiotensin I + H2O = L-histidyl-L-leucine + angiotensin II. The enzyme catalyses bradykinin + H2O = L-Phe-L-Arg + bradykinin(1-7). The catalysed reaction is substance P + H2O = substance P(1-9) + L-Leu-L-Met-NH2. It catalyses the reaction substance P + H2O = substance P(1-8) + Gly-L-Leu-L-Met-NH2. It carries out the reaction substance P + H2O = L-Phe-L-Phe-Gly-L-Leu-L-Met-NH2 + substance P(1-6). The enzyme catalyses neurotensin + H2O = neurotensin(1-11) + L-isoleucyl-L-leucine. The catalysed reaction is goralatide + H2O = N-acetyl-L-seryl-L-aspartate + L-lysyl-L-proline. It catalyses the reaction Met-enkephalin + H2O = L-phenylalanyl-L-methionine + L-tyrosylglycylglycine. It carries out the reaction Leu-enkephalin + H2O = L-tyrosylglycylglycine + L-phenylalanyl-L-leucine. The enzyme catalyses Met-enkephalin-Arg-Phe + H2O = L-arginyl-L-phenylalanine + Met-enkephalin. The dipeptidyl carboxypeptidase activity is strongly activated by chloride. The dipeptidyl carboxypeptidase activity is specifically inhibited by lisinopril, captopril and enalaprilat. In terms of biological role, dipeptidyl carboxypeptidase that removes dipeptides from the C-terminus of a variety of circulating hormones, such as angiotensin I, bradykinin or enkephalins, thereby playing a key role in the regulation of blood pressure, electrolyte homeostasis or synaptic plasticity. Composed of two similar catalytic domains, each possessing a functional active site, with different selectivity for substrates. Plays a major role in the angiotensin-renin system that regulates blood pressure and sodium retention by the kidney by converting angiotensin I to angiotensin II, resulting in an increase of the vasoconstrictor activity of angiotensin. Also able to inactivate bradykinin, a potent vasodilator, and therefore enhance the blood pressure response. Acts as a regulator of synaptic transmission by mediating cleavage of neuropeptide hormones, such as substance P, neurotensin or enkephalins. Catalyzes degradation of different enkephalin neuropeptides (Met-enkephalin, Leu-enkephalin, Met-enkephalin-Arg-Phe and possibly Met-enkephalin-Arg-Gly-Leu). Acts as a regulator of synaptic plasticity in the nucleus accumbens of the brain by mediating cleavage of Met-enkephalin-Arg-Phe, a strong ligand of Mu-type opioid receptor OPRM1, into Met-enkephalin. Met-enkephalin-Arg-Phe cleavage by ACE decreases activation of OPRM1, leading to long-term synaptic potentiation of glutamate release. Also acts as a regulator of hematopoietic stem cell differentiation by mediating degradation of hemoregulatory peptide N-acetyl-SDKP (AcSDKP). Acts as a regulator of cannabinoid signaling pathway by mediating degradation of hemopressin, an antagonist peptide of the cannabinoid receptor CNR1. Involved in amyloid-beta metabolism by catalyzing degradation of Amyloid-beta protein 40 and Amyloid-beta protein 42 peptides, thereby preventing plaque formation. Catalyzes cleavage of cholecystokinin (maturation of Cholecystokinin-8 and Cholecystokinin-5) and Gonadoliberin-1 (both maturation and degradation) hormones. Degradation of hemoregulatory peptide N-acetyl-SDKP (AcSDKP) and amyloid-beta proteins is mediated by the N-terminal catalytic domain, while angiotensin I and cholecystokinin cleavage is mediated by the C-terminal catalytic region. Its function is as follows. Soluble form that is released in blood plasma and other body fluids following proteolytic cleavage in the juxtamembrane stalk region. The chain is Angiotensin-converting enzyme from Bos taurus (Bovine).